The chain runs to 593 residues: Actin-histidine N-methyltransferase (593 aa).

Residues 1-21 form a disordered region; the sequence is MGKKSRVKTQKSGTGATAAVS. S-adenosyl-L-methionine is bound by residues R75, 104–106, R254, 275–279, and 325–327; these read EGF, DMCNH, and SGF. The SET domain maps to 94–314; sequence EGFEIANFEE…AGEQIYIFYG (221 aa). The interval 549 to 593 is disordered; that stretch reads GFVNGENSLFNGTKSESENLIKEESNRETEDAKESSSESTDEVKE. Over residues 553-562 the composition is skewed to polar residues; that stretch reads GENSLFNGTK. Over residues 563–593 the composition is skewed to basic and acidic residues; sequence SESENLIKEESNRETEDAKESSSESTDEVKE.

It belongs to the class V-like SAM-binding methyltransferase superfamily. SETD3 actin-histidine methyltransferase family.

The protein localises to the cytoplasm. It carries out the reaction L-histidyl-[protein] + S-adenosyl-L-methionine = N(tele)-methyl-L-histidyl-[protein] + S-adenosyl-L-homocysteine + H(+). Protein-histidine N-methyltransferase that specifically mediates 3-methylhistidine (tele-methylhistidine) methylation of actin at 'His-73'. Does not have protein-lysine N-methyltransferase activity and probably only catalyzes histidine methylation of actin. This is Actin-histidine N-methyltransferase from Gallus gallus (Chicken).